The chain runs to 221 residues: Thiamine-phosphate synthase (221 aa).

4-amino-2-methyl-5-(diphosphooxymethyl)pyrimidine contacts are provided by residues 44–48 (QFREK) and N79. Mg(2+) is bound by residues D80 and D99. Position 117 (S117) interacts with 4-amino-2-methyl-5-(diphosphooxymethyl)pyrimidine. 2-[(2R,5Z)-2-carboxy-4-methylthiazol-5(2H)-ylidene]ethyl phosphate is bound at residue 143 to 145 (TRS). Residue K146 participates in 4-amino-2-methyl-5-(diphosphooxymethyl)pyrimidine binding. 2-[(2R,5Z)-2-carboxy-4-methylthiazol-5(2H)-ylidene]ethyl phosphate contacts are provided by residues G175 and 195–196 (IS).

It belongs to the thiamine-phosphate synthase family. Mg(2+) serves as cofactor.

The catalysed reaction is 2-[(2R,5Z)-2-carboxy-4-methylthiazol-5(2H)-ylidene]ethyl phosphate + 4-amino-2-methyl-5-(diphosphooxymethyl)pyrimidine + 2 H(+) = thiamine phosphate + CO2 + diphosphate. It catalyses the reaction 2-(2-carboxy-4-methylthiazol-5-yl)ethyl phosphate + 4-amino-2-methyl-5-(diphosphooxymethyl)pyrimidine + 2 H(+) = thiamine phosphate + CO2 + diphosphate. It carries out the reaction 4-methyl-5-(2-phosphooxyethyl)-thiazole + 4-amino-2-methyl-5-(diphosphooxymethyl)pyrimidine + H(+) = thiamine phosphate + diphosphate. Its pathway is cofactor biosynthesis; thiamine diphosphate biosynthesis; thiamine phosphate from 4-amino-2-methyl-5-diphosphomethylpyrimidine and 4-methyl-5-(2-phosphoethyl)-thiazole: step 1/1. Its function is as follows. Condenses 4-methyl-5-(beta-hydroxyethyl)thiazole monophosphate (THZ-P) and 2-methyl-4-amino-5-hydroxymethyl pyrimidine pyrophosphate (HMP-PP) to form thiamine monophosphate (TMP). The chain is Thiamine-phosphate synthase from Geobacillus thermodenitrificans (strain NG80-2).